The chain runs to 515 residues: MGKLKKKGERGAATNYVSRNQALKKLQLSLPDFRRLCILKGIYPVEPKNKKKVNKGSTANKTYYYVKDIQWLAHEPVLNKFREFKVFLRKLKKAIAKEQPGTADRLEDNKPVYTLDHIVKERYPTFIDALRDLDDALSMLFLFSIMPQTDKIQAAVVQDCRRLSVEFQHYIISSRSLRKVFFSIKGIYFQAEIQGQTITWITPYQFCQDPPTDVDFRVMLTFVDFYKTMMGFINFKLYNNLNMHYPPVLADKTDKKLDTNYCKDTEVEDEVLAALNHTLKIIQTQEEDLEVDEFPIDPNSEDAEAIQAQKEEETKLERLKNLFSECKVFLSREVPRETLVFMIRSFGGQVSWDVSTAIGATFAETDESITHQIVDRPSQGHQFLSRYYIQPQWVADSINQGKLLPVEEYFPGEELPPHLSPFVKEEEGDYVPPERKAIMDQEMDTNQNEVTEEEEVPDMTREEKELAVAAMPRKDRRLYEKIMHSKKKKRSEVRKLESKRKVHDEEKAKKKLKSS.

The stretch at 270–327 forms a coiled coil; that stretch reads EVLAALNHTLKIIQTQEEDLEVDEFPIDPNSEDAEAIQAQKEEETKLERLKNLFSECK. Residues 318–411 form the BRCT domain; the sequence is RLKNLFSECK…KLLPVEEYFP (94 aa). The tract at residues 477–515 is disordered; that stretch reads RLYEKIMHSKKKKRSEVRKLESKRKVHDEEKAKKKLKSS. The span at 484 to 501 shows a compositional bias: basic residues; that stretch reads HSKKKKRSEVRKLESKRK.

The protein belongs to the pescadillo family.

The protein resides in the nucleus. It localises to the nucleolus. The protein localises to the nucleoplasm. Required for maturation of ribosomal RNAs and formation of the large ribosomal subunit. The polypeptide is Pescadillo homolog (Nematostella vectensis (Starlet sea anemone)).